The chain runs to 185 residues: MIDEALFEAEEKMEKAVTVAKDDLGSIRTGRANPGMFNRIGIDYYGAFTPITQLASINVPEARLVVVKPYEASQLGAIETAIRNSDLGVNPSNDGNLIRISVPQLTEERRRELVKQAKSKGEDAKVSVRNVRRKAMDELSRIQKDGEAGEDEVGRAEKELDKTTARYVAQVDELVKHKEAELLEV.

The tract at residues 141–160 (RIQKDGEAGEDEVGRAEKEL) is disordered.

This sequence belongs to the RRF family.

It localises to the cytoplasm. Functionally, responsible for the release of ribosomes from messenger RNA at the termination of protein biosynthesis. May increase the efficiency of translation by recycling ribosomes from one round of translation to another. This Rhodococcus jostii (strain RHA1) protein is Ribosome-recycling factor.